A 326-amino-acid chain; its full sequence is Fructose operon regulatory protein (326 aa).

Residues 1 to 58 enclose the HTH lacI-type domain; that stretch reads MTLDEIAKLAGVSKTTASYVINGKAQKYRISEKTQHKVMAVVEQYNFRPDHAASALRA. The segment at residues 3–22 is a DNA-binding region (H-T-H motif); that stretch reads LDEIAKLAGVSKTTASYVIN.

In terms of assembly, homodimer.

Interaction with F1P may induce a structural change in the DNA spacer region between the -35 and -10 elements, thereby facilitating RNAP binding to the promoter to trigger the transcriptional activation of the fru operon. Interaction with F1P does not release FruR from its binding sequence. Regulates the expression of the fruBKA (fru) operon, which encodes proteins involved in the import and metabolism of fructose. In the absence of fructose 1-phosphate (F1P), binds to the promoter region of fruB, interferes with the binding of the RNA polymerase (RNAP) to the promoter and represses the expression of the operon. In the presence of F1P, activates the transcription of the fru operon by facilitating the binding of RNAP to the promoter. Essential for the expression of the fru operon and thus for growth on fructose. In Vibrio cholerae serotype O1 (strain ATCC 39315 / El Tor Inaba N16961), this protein is Fructose operon regulatory protein.